We begin with the raw amino-acid sequence, 978 residues long: NACHT, LRR and PYD domains-containing protein 4E (978 aa).

Residues 1–93 (MASFFSDFGL…MERAGREIAG (93 aa)) enclose the Pyrin domain. Residues 148-471 (HMVFLQGVAG…FHLLKSHVDH (324 aa)) enclose the NACHT domain. An ATP-binding site is contributed by 154 to 161 (GVAGIGKS). LRR repeat units lie at residues 594-617 (CSTL…HSYT), 694-717 (LLNL…LNQA), 746-773 (SKML…LCHP), 802-825 (NKTL…VLCG), 859-882 (NQNL…LLCD), and 916-940 (CKTL…LFEA).

It belongs to the NLRP family.

Functionally, may be involved in inflammation and recognition of cytosolic pathogen-associated molecular patterns (PAMPs) not intercepted by membrane-bound receptors. In Mus musculus (Mouse), this protein is NACHT, LRR and PYD domains-containing protein 4E (Nlrp4e).